Reading from the N-terminus, the 619-residue chain is Manganese lipoxygenase (619 aa).

The N-terminal stretch at 1–16 (MRVLVWIAGLAPLAVA) is a signal peptide. N-linked (GlcNAc...) asparagine glycosylation is found at asparagine 32, asparagine 42, asparagine 62, asparagine 86, asparagine 164, and asparagine 229. The Lipoxygenase domain occupies 55-619 (TLPCEDGNST…PGNIPFYLSV (565 aa)). Positions 298, 303, 483, and 487 each coordinate Mn(2+). 2 N-linked (GlcNAc...) asparagine glycosylation sites follow: asparagine 515 and asparagine 549. A Mn(2+)-binding site is contributed by valine 619.

This sequence belongs to the lipoxygenase family. Manganese lipoxygenase subfamily. Mn(2+) serves as cofactor.

It localises to the secreted. It carries out the reaction (9Z,12Z)-octadecadienoate + O2 = (9S)-hydroperoxy-(10E,12Z)-octadecadienoate. The catalysed reaction is (9Z,12Z)-octadecadienoate + O2 = (11S)-hydroperoxy-(9Z,12Z)-octadecadienoate. The enzyme catalyses (9Z,12Z)-octadecadienoate + O2 = (13R)-hydroperoxy-(9Z,11E)-octadecadienoate. It catalyses the reaction (9Z,12Z,15Z)-octadecatrienoate + O2 = (9S)-hydroperoxy-(10E,12Z,15Z)-octadecatrienoate. It carries out the reaction (9Z,12Z,15Z)-octadecatrienoate + O2 = (11R)-hydroperoxy-(9Z,12Z,15Z)-octadecatrienoate. The catalysed reaction is (9Z,12Z,15Z)-octadecatrienoate + O2 = (13R)-hydroperoxy-(9Z,11E,15Z)-octadecatrienoate. The enzyme catalyses (9S)-hydroperoxy-(10E,12Z,15Z)-octadecatrienoate + O2 = (9S,16S)-dihydroperoxy-(10E,12Z,14E)-octadecatrienoate. Its function is as follows. Lipoxygenase that metabolizes linoleic and alpha-linolenic acids to 9S-, 11- and 13R-hydroperoxy fatty acids. At the end of lipoxygenation, the intermediate product 11S-HPODE from linoleic acid is then transformed into 9S-HPODE and 13R-HPODE as the final products. The intermediate product 11R-HPOTrE from alpha-linolenic acid is transformed into 9S-HPOTrE and 13R-HPOTrE as the final products. 9S-HPOTrE is further oxidized by the enzyme to 9S,16S-DiHPOTrE as the end product. The chain is Manganese lipoxygenase from Pyricularia oryzae (strain 70-15 / ATCC MYA-4617 / FGSC 8958) (Rice blast fungus).